The following is a 146-amino-acid chain: Ribonuclease H (146 aa).

One can recognise an RNase H type-1 domain in the interval 1-142 (MNKIIIYTDG…ADALANLAMD (142 aa)). Positions 9, 47, 70, and 134 each coordinate Mg(2+).

This sequence belongs to the RNase H family. Monomer. It depends on Mg(2+) as a cofactor.

It localises to the cytoplasm. It carries out the reaction Endonucleolytic cleavage to 5'-phosphomonoester.. Endonuclease that specifically degrades the RNA of RNA-DNA hybrids. This is Ribonuclease H from Ruthia magnifica subsp. Calyptogena magnifica.